The sequence spans 281 residues: Bifunctional protein FolD (281 aa).

NADP(+)-binding positions include G165–G167, T192, and V233.

This sequence belongs to the tetrahydrofolate dehydrogenase/cyclohydrolase family. Homodimer.

The catalysed reaction is (6R)-5,10-methylene-5,6,7,8-tetrahydrofolate + NADP(+) = (6R)-5,10-methenyltetrahydrofolate + NADPH. It catalyses the reaction (6R)-5,10-methenyltetrahydrofolate + H2O = (6R)-10-formyltetrahydrofolate + H(+). The protein operates within one-carbon metabolism; tetrahydrofolate interconversion. In terms of biological role, catalyzes the oxidation of 5,10-methylenetetrahydrofolate to 5,10-methenyltetrahydrofolate and then the hydrolysis of 5,10-methenyltetrahydrofolate to 10-formyltetrahydrofolate. The chain is Bifunctional protein FolD from Mycobacterium tuberculosis (strain ATCC 25177 / H37Ra).